Here is a 272-residue protein sequence, read N- to C-terminus: Enoyl-[acyl-carrier-protein] reductase [NADH] 1 (272 aa).

Residues glycine 17, 23–24, glutamine 44, 68–69, and isoleucine 96 contribute to the NAD(+) site; these read SI and DV. Catalysis depends on proton acceptor residues tyrosine 149 and tyrosine 159. NAD(+) contacts are provided by residues lysine 166 and 195–199; that span reads IKTLA.

The protein belongs to the short-chain dehydrogenases/reductases (SDR) family. FabI subfamily.

It localises to the cell inner membrane. It catalyses the reaction a 2,3-saturated acyl-[ACP] + NAD(+) = a (2E)-enoyl-[ACP] + NADH + H(+). It functions in the pathway lipid metabolism; fatty acid biosynthesis. This Rhizobium meliloti (strain 1021) (Ensifer meliloti) protein is Enoyl-[acyl-carrier-protein] reductase [NADH] 1 (fabI1).